Reading from the N-terminus, the 668-residue chain is Fructose-1,6-bisphosphatase class 3 (668 aa).

This sequence belongs to the FBPase class 3 family. Requires Mn(2+) as cofactor.

The enzyme catalyses beta-D-fructose 1,6-bisphosphate + H2O = beta-D-fructose 6-phosphate + phosphate. It participates in carbohydrate biosynthesis; gluconeogenesis. In Clostridium botulinum (strain Langeland / NCTC 10281 / Type F), this protein is Fructose-1,6-bisphosphatase class 3.